Here is a 188-residue protein sequence, read N- to C-terminus: Elongation factor P (188 aa).

Lys-34 is modified (N6-(3,6-diaminohexanoyl)-5-hydroxylysine).

The protein belongs to the elongation factor P family. May be beta-lysylated on the epsilon-amino group of Lys-34 by the combined action of EpmA and EpmB, and then hydroxylated on the C5 position of the same residue by EpmC (if this protein is present). Lysylation is critical for the stimulatory effect of EF-P on peptide-bond formation. The lysylation moiety may extend toward the peptidyltransferase center and stabilize the terminal 3-CCA end of the tRNA. Hydroxylation of the C5 position on Lys-34 may allow additional potential stabilizing hydrogen-bond interactions with the P-tRNA.

The protein resides in the cytoplasm. It functions in the pathway protein biosynthesis; polypeptide chain elongation. Its function is as follows. Involved in peptide bond synthesis. Alleviates ribosome stalling that occurs when 3 or more consecutive Pro residues or the sequence PPG is present in a protein, possibly by augmenting the peptidyl transferase activity of the ribosome. Modification of Lys-34 is required for alleviation. This Xanthomonas axonopodis pv. citri (strain 306) protein is Elongation factor P.